The primary structure comprises 396 residues: E3 ubiquitin-protein transferase MAEA (396 aa).

An extracellular and involved in cell to cell contact region spans residues 1–124 (MAVQESAAQL…AAASVWKRKR (124 aa)). The residue at position 28 (T28) is a Phosphothreonine. Residues 121 to 153 (KRKRMDRMMVEHLLRCGYYNTAVKLARQSGIED) form the LisH domain. The CTLH domain maps to 159-216 (MFLTAKEVEESLERRETATCLAWCHDNKSRLRKMKSCLEFSLRIQEFIELIRQNKRLD). The RING-Gid-type zinc finger occupies 314 to 381 (CPVCSRSLNK…QDDKVVCPRT (68 aa)).

Identified in the CTLH complex that contains GID4, RANBP9 and/or RANBP10, MKLN1, MAEA, RMND5A (or alternatively its paralog RMND5B), GID8, ARMC8, WDR26 and YPEL5. Within this complex, MAEA, RMND5A (or alternatively its paralog RMND5B), GID8, WDR26, and RANBP9 and/or RANBP10 form the catalytic core, while GID4, MKLN1, ARMC8 and YPEL5 have ancillary roles. Interacts with F-actin. Autoubiquitinated as component of the CTLH E3 ubiquitin-protein ligase complex (in vitro).

Its subcellular location is the cytoplasm. The protein resides in the nucleus. The protein localises to the nucleoplasm. It is found in the nucleus matrix. It localises to the cell membrane. Its subcellular location is the cytoskeleton. It carries out the reaction S-ubiquitinyl-[E2 ubiquitin-conjugating enzyme]-L-cysteine + [acceptor protein]-L-lysine = [E2 ubiquitin-conjugating enzyme]-L-cysteine + N(6)-ubiquitinyl-[acceptor protein]-L-lysine.. In terms of biological role, core component of the CTLH E3 ubiquitin-protein ligase complex that selectively accepts ubiquitin from UBE2H and mediates ubiquitination and subsequent proteasomal degradation of the transcription factor HBP1. MAEA and RMND5A are both required for catalytic activity of the CTLH E3 ubiquitin-protein ligase complex. MAEA is required for normal cell proliferation. The CTLH E3 ubiquitin-protein ligase complex is not required for the degradation of enzymes involved in gluconeogenesis, such as FBP1. Plays a role in erythroblast enucleation during erythrocyte maturation and in the development of mature macrophages. Mediates the attachment of erythroid cell to mature macrophages; this MAEA-mediated contact inhibits erythroid cell apoptosis. Participates in erythroblastic island formation, which is the functional unit of definitive erythropoiesis. Associates with F-actin to regulate actin distribution in erythroblasts and macrophages. May contribute to nuclear architecture and cells division events. The chain is E3 ubiquitin-protein transferase MAEA (MAEA) from Pongo abelii (Sumatran orangutan).